The primary structure comprises 538 residues: Pentachlorophenol 4-monooxygenase (538 aa).

FAD-binding positions include 16 to 45 (AVLI…MIDR) and 288 to 298 (YRKGNVFLAGD).

It belongs to the PheA/TfdB FAD monooxygenase family. In terms of assembly, homodimer. It depends on FAD as a cofactor.

The enzyme catalyses pentachlorophenol + NADPH + O2 + H(+) = 2,3,5,6-tetrachloro-1,4-benzoquinone + chloride + NADP(+) + H2O. The catalysed reaction is 2,3,5,6-tetrachlorophenol + NADPH + O2 = 2,3,5,6-tetrachlorohydroquinone + NADP(+) + H2O. It participates in xenobiotic degradation; pentachlorophenol degradation. Its function is as follows. Dechlorination of pentachlorophenol to tetrachlorobenzoquinone. Also removes hydrogen and nitro, amino, and cyano groups from benzene ring at the para position in relation to the hydroxyl of phenol. The sequence is that of Pentachlorophenol 4-monooxygenase (pcpB) from Sphingobium chlorophenolicum.